The sequence spans 334 residues: Fructose-1,6-bisphosphatase class 1 (334 aa).

4 residues coordinate Mg(2+): Glu90, Asp113, Leu115, and Asp116. Residues 116–119 (DGSS), Asn209, Tyr242, and Lys272 contribute to the substrate site. Glu278 contributes to the Mg(2+) binding site.

This sequence belongs to the FBPase class 1 family. In terms of assembly, homotetramer. The cofactor is Mg(2+).

Its subcellular location is the cytoplasm. It catalyses the reaction beta-D-fructose 1,6-bisphosphate + H2O = beta-D-fructose 6-phosphate + phosphate. The protein operates within carbohydrate biosynthesis; gluconeogenesis. The sequence is that of Fructose-1,6-bisphosphatase class 1 from Actinobacillus pleuropneumoniae serotype 5b (strain L20).